We begin with the raw amino-acid sequence, 162 residues long: MDNLNINLINDDEHPIPSQDLLLKCLQLVADKHHISHAEVNLNIVSNDEIQQINKQFRNKDKPTNIISFEFEKPQGLPDDIANDFLGDIVIAPAVLENEAKEQNKELNDHWQHIFIHGLLHLLGYDHQDDQEAEVMENLEIQLLAQLGIANPYIEQENQNGR.

Zn(2+)-binding residues include histidine 117, histidine 121, and histidine 127.

Belongs to the endoribonuclease YbeY family. It depends on Zn(2+) as a cofactor.

Its subcellular location is the cytoplasm. In terms of biological role, single strand-specific metallo-endoribonuclease involved in late-stage 70S ribosome quality control and in maturation of the 3' terminus of the 16S rRNA. This Francisella tularensis subsp. novicida (strain U112) protein is Endoribonuclease YbeY.